Consider the following 1214-residue polypeptide: Sodium bicarbonate cotransporter 3 (1214 aa).

Over residues 1 to 12 (MERFRLEKKLPG) the composition is skewed to basic and acidic residues. Disordered stretches follow at residues 1-22 (MERF…VDLG) and 52-93 (SKES…PSQR). Topologically, residues 1–608 (MERFRLEKKL…DFKDALSLQC (608 aa)) are extracellular. Phosphoserine occurs at positions 52, 55, 84, 150, 165, and 168. Positions 55–72 (SRRRHRHRGHKHHHRRRK) are enriched in basic residues. Residues 73-85 (DKESDKEDGRESP) are compositionally biased toward basic and acidic residues. N-linked (GlcNAc...) asparagine glycosylation is present at N171. S233, S242, S255, R258, S260, T263, G264, and A267 each carry phosphoserine. Residue N269 is glycosylated (N-linked (GlcNAc...) asparagine). Disordered regions lie at residues 289–346 (SRAG…IPTV), 362–408 (EEQK…ENST), and 552–572 (FHNG…HHAG). The span at 303-313 (VPTPQNSPPSS) shows a compositional bias: pro residues. Over residues 314 to 332 (PSISRLTSRSSQESQRQAP) the composition is skewed to low complexity. The span at 379–392 (SPQSAPGNLDNSKS) shows a compositional bias: polar residues. S382 carries the post-translational modification Phosphoserine. N398 carries N-linked (GlcNAc...) asparagine glycosylation. Residues S400 and S403 each carry the phosphoserine modification. N406 carries an N-linked (GlcNAc...) asparagine glycan. Phosphoserine is present on residues S407 and S556. A Phosphothreonine modification is found at T557. Basic and acidic residues predominate over residues 563–572 (TPKEAAHHAG). A helical transmembrane segment spans residues 609–629 (LASILFLYCACMSPVITFGGL). The Cytoplasmic segment spans residues 630-637 (LGEATEGR). A helical membrane pass occupies residues 638–658 (ISAIESLFGASLTGIAYSLFA). The Extracellular portion of the chain corresponds to 659-695 (GQPLTILGSTGPVLVFEKILYKFCRDYQLSYLSLRTS). A helical transmembrane segment spans residues 696–716 (IGLWTSFLCIVLVATDASSLV). The Cytoplasmic segment spans residues 717–725 (CYITRFTEE). The chain crosses the membrane as a helical span at residues 726–746 (AFAALICIIFIYEALEKLFDL). K742 is modified (phosphoserine). Residues 747 to 817 (GETYAFNMHN…VFLGSACGHH (71 aa)) are Extracellular-facing. An intrachain disulfide couples C766 to C768. A phosphoserine mark is found at P771 and P774. N-linked (GlcNAc...) asparagine glycosylation occurs at N776. A780 bears the Phosphoserine mark. Residues N786 and N791 are each glycosylated (N-linked (GlcNAc...) asparagine). C802 and C814 form a disulfide bridge. The helical transmembrane segment at 818–838 (GPYIPDVLFWCVILFFTTFFL) threads the bilayer. Over 839–861 (SSFLKQFKTKRYFPTKVRSTISD) the chain is Cytoplasmic. A helical transmembrane segment spans residues 862-882 (FAVFLTIVIMVTIDYLVGVPS). The Extracellular portion of the chain corresponds to 883-908 (PKLHVPEKFEPTHPERGWIISPLGDN). Residues 909-929 (PWWTLLIAAIPALLCTILIFM) form a helical membrane-spanning segment. Residues 930–954 (DQQITAVIINRKEHKLKKGAGYHLD) lie on the Cytoplasmic side of the membrane. The helical transmembrane segment at 955–975 (LLMVGVMLGVCSVMGLPWFVA) threads the bilayer. The Extracellular segment spans residues 976 to 1011 (ATVLSISHVNSLKVESECSAPGEQPKFLGIREQRVT). Residues E1007, V1010, and F1016 each carry the phosphoserine modification. Essential for cell membrane localization and transport activity regions lie at residues 1008–1131 (QRVT…KREL) and 1127–1214 (TKRE…ETSL). A helical transmembrane segment spans residues 1012 to 1032 (GLMIFILMGLSVFMTSVLKFI). The Cytoplasmic segment spans residues 1033–1034 (PM). Residues 1035 to 1055 (PVLYGVFLYMGVSSLKGIQLF) traverse the membrane as a helical segment. The Extracellular segment spans residues 1056-1092 (DRIKLFGMPAKHQPDLIYLRYVPLWKVHIFTVIQLTC). Phosphoserine occurs at positions 1073, 1077, 1102, 1105, 1106, 1109, 1111, and 1115. Residues 1093–1113 (LVLLWVIKVSAAAVVFPMMVL) traverse the membrane as a helical segment. At 1114–1214 (ALVFVRKLMD…KKYVDAETSL (101 aa)) the chain is on the cytoplasmic side. The interval 1134–1136 (LDD) is CA2-binding. Basic and acidic residues predominate over residues 1144-1162 (KKEDDKKKKEKEEAERMLQ). The interval 1144-1169 (KKEDDKKKKEKEEAERMLQDDDDTVH) is disordered. Phosphothreonine is present on T1167. Phosphoserine occurs at positions 1176, 1188, 1201, and 1213. A PDZ-binding motif is present at residues 1211-1214 (ETSL).

The protein belongs to the anion exchanger (TC 2.A.31) family. In terms of assembly, interacts with CFTR through NHERF1/EBP50. Interacts with USH1C. Forms a complex with ATP6V1B1 and NHERF1/EBP50. Interacts in a pH dependent-manner with CA2/carbonic anhydrase 2. Highly expressed in testis and spleen. Also expressed in retina, colon, small intestine, ovary, thymus, prostate, muscle, heart and kidney. As to expression, expressed in skeletal muscle and heart muscle.

The protein localises to the basolateral cell membrane. Its subcellular location is the apical cell membrane. It is found in the cell projection. It localises to the stereocilium. The protein resides in the cell membrane. It catalyses the reaction hydrogencarbonate(in) + Na(+)(in) = hydrogencarbonate(out) + Na(+)(out). Its activity is regulated as follows. Transporter activity is regulated by CA2/carbonic anhydrase 2, cAMP and PKA. Insensitive to stilbene derivatives. Inhibited by 5-(N-ethyl-N-isopropyl)-amiloride (EIPA). Functionally, electroneutral sodium- and bicarbonate-dependent cotransporter with a Na(+):HCO3(-) 1:1 stoichiometry. Mediates the sodium-dependent bicarbonate transport important for pH recovery after acid load as well as for regulation of steady-state pH in the duodenum and vascular smooth muscle cells. Plays a key role in macrophage acidification, mediating bicarbonate import into the cytoplasm which is crucial for net acid extrusion and maintenance of cytoplasmic pH during phagocytosis. Provides cellular bicarbonate for de novo purine and pyrimidine synthesis and is a key mediator of de novo nucleotide synthesis downstream of mTORC1 signaling in proliferating cells. Plays a key role in macrophage acidification, mediating bicarbonate import into the cytoplasm which is crucial for net acid extrusion and maintenance of cytoplasmic pH during phagocytosis. This chain is Sodium bicarbonate cotransporter 3 (SLC4A7), found in Homo sapiens (Human).